The sequence spans 334 residues: Holliday junction branch migration complex subunit RuvB (334 aa).

Positions methionine 1–tyrosine 179 are large ATPase domain (RuvB-L). ATP contacts are provided by residues leucine 18, arginine 19, glycine 60, lysine 63, threonine 64, serine 65, glutamate 126–phenylalanine 128, arginine 169, tyrosine 179, and arginine 216. Threonine 64 contributes to the Mg(2+) binding site. Residues threonine 180 to leucine 250 form a small ATPAse domain (RuvB-S) region. The interval asparagine 253–glutamate 334 is head domain (RuvB-H). DNA is bound by residues arginine 308 and arginine 313.

The protein belongs to the RuvB family. In terms of assembly, homohexamer. Forms an RuvA(8)-RuvB(12)-Holliday junction (HJ) complex. HJ DNA is sandwiched between 2 RuvA tetramers; dsDNA enters through RuvA and exits via RuvB. An RuvB hexamer assembles on each DNA strand where it exits the tetramer. Each RuvB hexamer is contacted by two RuvA subunits (via domain III) on 2 adjacent RuvB subunits; this complex drives branch migration. In the full resolvosome a probable DNA-RuvA(4)-RuvB(12)-RuvC(2) complex forms which resolves the HJ.

Its subcellular location is the cytoplasm. It carries out the reaction ATP + H2O = ADP + phosphate + H(+). Functionally, the RuvA-RuvB-RuvC complex processes Holliday junction (HJ) DNA during genetic recombination and DNA repair, while the RuvA-RuvB complex plays an important role in the rescue of blocked DNA replication forks via replication fork reversal (RFR). RuvA specifically binds to HJ cruciform DNA, conferring on it an open structure. The RuvB hexamer acts as an ATP-dependent pump, pulling dsDNA into and through the RuvAB complex. RuvB forms 2 homohexamers on either side of HJ DNA bound by 1 or 2 RuvA tetramers; 4 subunits per hexamer contact DNA at a time. Coordinated motions by a converter formed by DNA-disengaged RuvB subunits stimulates ATP hydrolysis and nucleotide exchange. Immobilization of the converter enables RuvB to convert the ATP-contained energy into a lever motion, pulling 2 nucleotides of DNA out of the RuvA tetramer per ATP hydrolyzed, thus driving DNA branch migration. The RuvB motors rotate together with the DNA substrate, which together with the progressing nucleotide cycle form the mechanistic basis for DNA recombination by continuous HJ branch migration. Branch migration allows RuvC to scan DNA until it finds its consensus sequence, where it cleaves and resolves cruciform DNA. This is Holliday junction branch migration complex subunit RuvB from Chlamydia trachomatis serovar A (strain ATCC VR-571B / DSM 19440 / HAR-13).